The following is a 305-amino-acid chain: Ribosomal RNA small subunit methyltransferase H (305 aa).

Residues G30–H32, D49, F74, D96, and Q103 each bind S-adenosyl-L-methionine.

It belongs to the methyltransferase superfamily. RsmH family.

It localises to the cytoplasm. The enzyme catalyses cytidine(1402) in 16S rRNA + S-adenosyl-L-methionine = N(4)-methylcytidine(1402) in 16S rRNA + S-adenosyl-L-homocysteine + H(+). Specifically methylates the N4 position of cytidine in position 1402 (C1402) of 16S rRNA. The polypeptide is Ribosomal RNA small subunit methyltransferase H (Francisella tularensis subsp. holarctica (strain LVS)).